The chain runs to 312 residues: Olfactory receptor 2L13 (312 aa).

Topologically, residues Met1 to Ile24 are extracellular. N-linked (GlcNAc...) asparagine glycosylation is found at Asn5 and Asn20. The chain crosses the membrane as a helical span at residues Phe25 to Ile48. The Cytoplasmic segment spans residues His49–Thr56. The helical transmembrane segment at Pro57–Pro78 threads the bilayer. The Extracellular portion of the chain corresponds to Lys79–Gln99. Cys96 and Cys188 form a disulfide bridge. Residues Ser100–Tyr119 traverse the membrane as a helical segment. The Cytoplasmic segment spans residues Asp120 to Met138. The chain crosses the membrane as a helical span at residues Met139 to Ala157. Residues His158–Tyr194 lie on the Extracellular side of the membrane. The chain crosses the membrane as a helical span at residues Glu195–Gly218. Residues Arg219–Lys235 are Cytoplasmic-facing. The chain crosses the membrane as a helical span at residues Ala236 to Tyr258. Residues Leu259–Lys271 lie on the Extracellular side of the membrane. A helical membrane pass occupies residues Ile272 to Leu291. The Cytoplasmic portion of the chain corresponds to Arg292–Glu312.

This sequence belongs to the G-protein coupled receptor 1 family.

Its subcellular location is the cell membrane. In terms of biological role, odorant receptor. The sequence is that of Olfactory receptor 2L13 (OR2L13) from Homo sapiens (Human).